Reading from the N-terminus, the 370-residue chain is DNA replication and repair protein RecF (370 aa).

Residue 30-37 (GENAQGKT) participates in ATP binding.

The protein belongs to the RecF family.

The protein resides in the cytoplasm. In terms of biological role, the RecF protein is involved in DNA metabolism; it is required for DNA replication and normal SOS inducibility. RecF binds preferentially to single-stranded, linear DNA. It also seems to bind ATP. In Listeria welshimeri serovar 6b (strain ATCC 35897 / DSM 20650 / CCUG 15529 / CIP 8149 / NCTC 11857 / SLCC 5334 / V8), this protein is DNA replication and repair protein RecF.